We begin with the raw amino-acid sequence, 483 residues long: Keratin, type II cytoskeletal 8 (483 aa).

A compositionally biased stretch (polar residues) spans 1-16 (MSIRVTQKSYKVSTSG). The segment at 1–41 (MSIRVTQKSYKVSTSGPRAFSSRSYTSGPGSRISSSSFSRV) is disordered. Residues 1–90 (MSIRVTQKSY…DPNIQAVRTQ (90 aa)) are head. Ser-9 is modified (phosphoserine; by PKC/PRKCE). Lys-11 participates in a covalent cross-link: Glycyl lysine isopeptide (Lys-Gly) (interchain with G-Cter in SUMO2). 4 positions are modified to phosphoserine: Ser-13, Ser-15, Ser-21, and Ser-22. At Arg-23 the chain carries Omega-N-methylarginine. Ser-24 is subject to Phosphoserine; by PKC/PRKCE. Residues 24–41 (SYTSGPGSRISSSSFSRV) show a composition bias toward low complexity. Phosphothreonine is present on Thr-26. 2 positions are modified to phosphoserine: Ser-27 and Ser-31. Arg-32 is subject to Omega-N-methylarginine. 3 positions are modified to phosphoserine: Ser-34, Ser-37, and Ser-39. Arg-40 carries the omega-N-methylarginine modification. A phosphoserine mark is found at Ser-43 and Ser-44. Asymmetric dimethylarginine; alternate is present on Arg-47. Omega-N-methylarginine; alternate is present on Arg-47. Residue Ser-74 is modified to Phosphoserine; by MAPK. Residues 91–126 (EKEQIKTLNNKFASFIDKVRFLEQQNKMLETKWSLL) form a coil 1A region. The region spanning 91–402 (EKEQIKTLNN…KLLEGEESRL (312 aa)) is the IF rod domain. Lys-101 carries the post-translational modification N6-malonyllysine. Glycyl lysine isopeptide (Lys-Gly) (interchain with G-Cter in SUMO2) cross-links involve residues Lys-122 and Lys-130. The interval 127–143 (QQQKTARSNMDNMFESY) is linker 1. Residues 144–235 (INNLRRQLET…QLYEEEIREL (92 aa)) are coil 1B. Lys-197 is covalently cross-linked (Glycyl lysine isopeptide (Lys-Gly) (interchain with G-Cter in SUMO1); alternate). Lys-197 is covalently cross-linked (Glycyl lysine isopeptide (Lys-Gly) (interchain with G-Cter in SUMO2); alternate). Position 207 is an N6-acetyllysine (Lys-207). Position 228 is a phosphotyrosine (Tyr-228). Residues 236–259 (QSQISDTSVVLSMDNSRSLDMDSI) form a linker 12 region. Residues Ser-253 and Ser-258 each carry the phosphoserine modification. A coil 2 region spans residues 260-398 (IAEVKAQYED…ATYRKLLEGE (139 aa)). The interval 261–382 (AEVKAQYEDI…EYQELMNVKL (122 aa)) is necessary for interaction with PNN. Residue Lys-264 forms a Glycyl lysine isopeptide (Lys-Gly) (interchain with G-Cter in SUMO2) linkage. The residue at position 274 (Ser-274) is a Phosphoserine. A Glycyl lysine isopeptide (Lys-Gly) (interchain with G-Cter in SUMO2) cross-link involves residue Lys-285. At Ser-291 the chain carries Phosphoserine. A Glycyl lysine isopeptide (Lys-Gly) (interchain with G-Cter in SUMO2); alternate cross-link involves residue Lys-295. The residue at position 295 (Lys-295) is an N6-acetyllysine; alternate. Lys-304 is covalently cross-linked (Glycyl lysine isopeptide (Lys-Gly) (interchain with G-Cter in SUMO2)). A Glycyl lysine isopeptide (Lys-Gly) (interchain with G-Cter in SUMO2); alternate cross-link involves residue Lys-325. Lys-325 bears the N6-acetyllysine; alternate mark. Residue Ser-330 is modified to Phosphoserine. A Glycyl lysine isopeptide (Lys-Gly) (interchain with G-Cter in SUMO2) cross-link involves residue Lys-393. Positions 399 to 483 (ESRLESGMQN…VSESSDVLPK (85 aa)) are tail. Ser-400, Ser-404, Ser-410, Ser-417, and Ser-424 each carry phosphoserine. At Ser-432 the chain carries Phosphoserine; by CaMK2 and MAPK. A Glycyl lysine isopeptide (Lys-Gly) (interchain with G-Cter in SUMO1); alternate cross-link involves residue Lys-472. Residue Lys-472 forms a Glycyl lysine isopeptide (Lys-Gly) (interchain with G-Cter in SUMO2); alternate linkage. Ser-475, Ser-477, and Ser-478 each carry phosphoserine.

It belongs to the intermediate filament family. As to quaternary structure, heterotetramer of two type I and two type II keratins. Forms a heterodimer with KRT18. Associates with KRT20. Interacts with PLEC isoform 1C, when in a heterodimer with KRT18. Interacts with PNN. When associated with KRT19, interacts with DMD. Interacts with TCHP. Interacts with APEX1. Interacts with GPER1. Interacts with EPPK1. Interacts with PKP1 and PKP2. (Microbial infection) Interacts with hepatitis C virus/HCV core protein. Post-translationally, phosphorylation on serine residues is enhanced during EGF stimulation and mitosis. Ser-74 phosphorylation plays an important role in keratin filament reorganization. In terms of processing, O-glycosylated. O-GlcNAcylation at multiple sites increases solubility, and decreases stability by inducing proteasomal degradation. O-glycosylated (O-GlcNAcylated), in a cell cycle-dependent manner. Observed in muscle fibers accumulating in the costameres of myoplasm at the sarcolemma membrane in structures that contain dystrophin and spectrin. Expressed in gingival mucosa and hard palate of the oral cavity.

The protein localises to the cytoplasm. Its subcellular location is the nucleus. It is found in the nucleoplasm. It localises to the nucleus matrix. Its function is as follows. Together with KRT19, helps to link the contractile apparatus to dystrophin at the costameres of striated muscle. This is Keratin, type II cytoskeletal 8 (KRT8) from Homo sapiens (Human).